The chain runs to 479 residues: Ribosomal RNA small subunit methyltransferase F (479 aa).

Residues 125–131 (AAAPGSK), Glu-149, Asp-176, and Asp-194 contribute to the S-adenosyl-L-methionine site. Cys-247 (nucleophile) is an active-site residue.

The protein belongs to the class I-like SAM-binding methyltransferase superfamily. RsmB/NOP family.

It is found in the cytoplasm. It carries out the reaction cytidine(1407) in 16S rRNA + S-adenosyl-L-methionine = 5-methylcytidine(1407) in 16S rRNA + S-adenosyl-L-homocysteine + H(+). Specifically methylates the cytosine at position 1407 (m5C1407) of 16S rRNA. The polypeptide is Ribosomal RNA small subunit methyltransferase F (Citrobacter koseri (strain ATCC BAA-895 / CDC 4225-83 / SGSC4696)).